The sequence spans 160 residues: Cytochrome c-type biogenesis protein CcmE (160 aa).

At 1–8 (MSAPRKTR) the chain is on the cytoplasmic side. A helical; Signal-anchor for type II membrane protein membrane pass occupies residues 9-29 (LYAILAVVCGAVLTIALMLYA). The Periplasmic portion of the chain corresponds to 30-160 (LSSNIDLFYT…PAAGPEGKRL (131 aa)). Residues His130 and Tyr134 each contribute to the heme site.

Belongs to the CcmE/CycJ family.

It is found in the cell inner membrane. In terms of biological role, heme chaperone required for the biogenesis of c-type cytochromes. Transiently binds heme delivered by CcmC and transfers the heme to apo-cytochromes in a process facilitated by CcmF and CcmH. The protein is Cytochrome c-type biogenesis protein CcmE of Pectobacterium atrosepticum (strain SCRI 1043 / ATCC BAA-672) (Erwinia carotovora subsp. atroseptica).